The primary structure comprises 376 residues: Queuine tRNA-ribosyltransferase (376 aa).

D89 functions as the Proton acceptor in the catalytic mechanism. Substrate-binding positions include 89–93 (DSGGF), D143, Q187, and G214. The tract at residues 245–251 (GVGKPQD) is RNA binding. The active-site Nucleophile is the D264. An RNA binding; important for wobble base 34 recognition region spans residues 269-273 (TRNAR). Zn(2+)-binding residues include C302, C304, C307, and H333.

It belongs to the queuine tRNA-ribosyltransferase family. As to quaternary structure, homodimer. Within each dimer, one monomer is responsible for RNA recognition and catalysis, while the other monomer binds to the replacement base PreQ1. Zn(2+) serves as cofactor.

The enzyme catalyses 7-aminomethyl-7-carbaguanine + guanosine(34) in tRNA = 7-aminomethyl-7-carbaguanosine(34) in tRNA + guanine. The protein operates within tRNA modification; tRNA-queuosine biosynthesis. In terms of biological role, catalyzes the base-exchange of a guanine (G) residue with the queuine precursor 7-aminomethyl-7-deazaguanine (PreQ1) at position 34 (anticodon wobble position) in tRNAs with GU(N) anticodons (tRNA-Asp, -Asn, -His and -Tyr). Catalysis occurs through a double-displacement mechanism. The nucleophile active site attacks the C1' of nucleotide 34 to detach the guanine base from the RNA, forming a covalent enzyme-RNA intermediate. The proton acceptor active site deprotonates the incoming PreQ1, allowing a nucleophilic attack on the C1' of the ribose to form the product. After dissociation, two additional enzymatic reactions on the tRNA convert PreQ1 to queuine (Q), resulting in the hypermodified nucleoside queuosine (7-(((4,5-cis-dihydroxy-2-cyclopenten-1-yl)amino)methyl)-7-deazaguanosine). The chain is Queuine tRNA-ribosyltransferase from Erwinia tasmaniensis (strain DSM 17950 / CFBP 7177 / CIP 109463 / NCPPB 4357 / Et1/99).